The sequence spans 389 residues: bZIP transcription factor 68 (389 aa).

Residues 1–16 (MGSSEMEKSGKEKEPK) are compositionally biased toward basic and acidic residues. Disordered stretches follow at residues 1 to 42 (MGSS…VSAG), 124 to 154 (MAEA…KRSK), 170 to 236 (AGKN…NLPV), 285 to 318 (QPWL…RKQA), and 356 to 389 (SSLK…QDVA). Low complexity predominate over residues 19 to 32 (PPSTSSSAPATVVS). Residues 137–149 (GDGKPSDGKEKLP) are compositionally biased toward basic and acidic residues. Residue K154 forms a Glycyl lysine isopeptide (Lys-Gly) (interchain with G-Cter in ubiquitin) linkage. Residues 170-205 (AGKNSGASANGACSKSAESGSDGSSDGSDANSQNDS) are compositionally biased toward low complexity. 2 stretches are compositionally biased toward basic and acidic residues: residues 206 to 215 (GSRHNGKDGE) and 304 to 318 (SNRE…RKQA). Residues 295–358 (EIKRQRRKQS…EELLAENSSL (64 aa)) form the bZIP domain. The tract at residues 297 to 316 (KRQRRKQSNRESARRSRLRK) is basic motif. Residues 323–358 (LAQRAEVLNGENSSLRAEINKLKSQYEELLAENSSL) are leucine-zipper. Polar residues predominate over residues 356–366 (SSLKNKFSSAP). Residues 372–389 (DLDKNEQEPQRSTRQDVA) are compositionally biased toward basic and acidic residues.

Belongs to the bZIP family. As to quaternary structure, monomer, homodimer and heterodimers with GBF1/BZIP41, GBF2/BZIP54 and GBF3/BZIP55. Heterodimers with BZIP16. Interacts with GIP1.

It localises to the nucleus. Transcriptional activator that binds to the G-box motif (5'-CACGTG-3') and other cis-acting elements with 5'-ACGT-3' core, such as Hex, C-box and as-1 motifs. Possesses high binding affinity to G-box, much lower affinity to Hex and C-box, and little affinity to as-1 element. G-box and G-box-like motifs are cis-acting elements defined in promoters of certain plant genes which are regulated by such diverse stimuli as light-induction or hormone control. Binds to the G-box motif 5'-CACGTG-3' of LHCB2.4 (At3g27690) promoter. May act as transcriptional activator in light-regulated expression of LHCB2.4. Probably binds DNA as monomer. DNA-binding activity is redox-dependent. The chain is bZIP transcription factor 68 from Arabidopsis thaliana (Mouse-ear cress).